A 135-amino-acid chain; its full sequence is Inner membrane protein YgfX (135 aa).

Residues 1-11 (MVLWQSDLRVS) are Cytoplasmic-facing. The not required to inhibit FtsZ or MreB polymerization stretch occupies residues 1 to 96 (MVLWQSDLRV…APWMIKSGMM (96 aa)). The chain crosses the membrane as a helical span at residues 12-32 (WRAQWLSLLIHGLVAAVILLM). Residues 33 to 37 (PWPLS) lie on the Periplasmic side of the membrane. A helical transmembrane segment spans residues 38 to 54 (YTPLWMVLLSLVVFDCV). At 55-135 (RSQRRINARQ…RILLQQETQR (81 aa)) the chain is on the cytoplasmic side.

Interacts with MreB and FtsZ; interaction with the latter requires FtsZ residues 33-49.

The protein resides in the cell inner membrane. Functionally, a probable inner membrane protein. Has been shown not to be a toxin, no effects on growth are seen in LB or minimal medium up to 6 or 21 hours (respectively) after induction of expression. Interacts with cytoskeletal proteins FtsZ and MreB; inhibits FtsZ GTP-dependent polymerization as well as MreB ATP-dependent polymerization. Restores production of prodigiosin antibiotic (Pig) in Serratia strains with deletions of sdhE-ygfX; overexpression of this protein and CptB also restores Pig production to a slightly lesser extent in Serratia. The polypeptide is Inner membrane protein YgfX (Escherichia coli (strain K12)).